The chain runs to 226 residues: Putative mitochondrial outer membrane protein porin 5 (226 aa).

This sequence belongs to the eukaryotic mitochondrial porin (TC 1.B.8.1) family.

Its subcellular location is the mitochondrion outer membrane. Its function is as follows. Putative channel that allows diffusion of small hydrophilic molecules through membranes. This chain is Putative mitochondrial outer membrane protein porin 5 (VDAC5), found in Arabidopsis thaliana (Mouse-ear cress).